A 102-amino-acid polypeptide reads, in one-letter code: MTTASSKVAIKPLEDRIVVQPLDAEQTTASGLVIPDTAKEKPQEGVVLAVGPGRFENGERLPLDVKTGDVVLYSKYGGTEVKYNGEEYLVLSARDVLAIIEK.

It belongs to the GroES chaperonin family. Heptamer of 7 subunits arranged in a ring. Interacts with the chaperonin GroEL.

It is found in the cytoplasm. Its function is as follows. Together with the chaperonin GroEL, plays an essential role in assisting protein folding. The GroEL-GroES system forms a nano-cage that allows encapsulation of the non-native substrate proteins and provides a physical environment optimized to promote and accelerate protein folding. GroES binds to the apical surface of the GroEL ring, thereby capping the opening of the GroEL channel. The sequence is that of Co-chaperonin GroES from Streptomyces albus G.